Reading from the N-terminus, the 344-residue chain is Cyclin-G2 (344 aa).

A disordered region spans residues 298–324; it reads CFDGSESEDSGEDMSCGEESLSSSPPS. The segment covering 302-313 has biased composition (acidic residues); it reads SESEDSGEDMSC.

This sequence belongs to the cyclin family. Cyclin G subfamily. As to expression, highest levels in intestine. Intermediate levels in spleen, brain and kidney. Low levels in testis, stomach, pancreas, liver, salivary gland and muscle. According to PubMed:9139721 also abundant in thymus.

Its subcellular location is the cytoplasm. The protein localises to the nucleus. May play a role in growth regulation and in negative regulation of cell cycle progression. This Mus musculus (Mouse) protein is Cyclin-G2 (Ccng2).